The following is a 350-amino-acid chain: Alcohol dehydrogenase 1 (350 aa).

7 residues coordinate Zn(2+): Cys-46, His-69, Cys-100, Cys-103, Cys-106, Cys-114, and Cys-156. NAD(+) contacts are provided by residues 180 to 186 (GAAGGLG), Asp-204, Lys-209, 271 to 273 (VGL), and Arg-343.

The protein belongs to the zinc-containing alcohol dehydrogenase family. As to quaternary structure, homotetramer. Zn(2+) serves as cofactor.

The protein resides in the cytoplasm. The catalysed reaction is a primary alcohol + NAD(+) = an aldehyde + NADH + H(+). The enzyme catalyses a secondary alcohol + NAD(+) = a ketone + NADH + H(+). The polypeptide is Alcohol dehydrogenase 1 (ADH1) (Kluyveromyces lactis (strain ATCC 8585 / CBS 2359 / DSM 70799 / NBRC 1267 / NRRL Y-1140 / WM37) (Yeast)).